Consider the following 358-residue polypeptide: uncharacterized protein (358 aa).

Zn(2+)-binding residues include cysteine 39, histidine 61, cysteine 92, cysteine 95, cysteine 98, cysteine 106, and aspartate 157.

The protein belongs to the zinc-containing alcohol dehydrogenase family. Zn(2+) is required as a cofactor.

This is an uncharacterized protein from Escherichia coli (strain K12).